Reading from the N-terminus, the 197-residue chain is MTNYPQLNKEIQDNEIKVVMHTNKGDMTFKLFPDIAPKTVENFVTHSKNGYYDGVTFHRVINDFMVQGGDPTATGMGGESIYGSAFEDEFSLEAFNLYGALSMANAGPNTNGSQFFIVQMKEVPENMLSQLADGGWPQPIVEAYGEKGGTPWLDQKHTVFGQLIEGESTLEDIANTKVGAQDKPVYDVVIESIDVEE.

Residues 14 to 195 enclose the PPIase cyclophilin-type domain; the sequence is NEIKVVMHTN…YDVVIESIDV (182 aa).

Belongs to the cyclophilin-type PPIase family.

It catalyses the reaction [protein]-peptidylproline (omega=180) = [protein]-peptidylproline (omega=0). Functionally, PPIases accelerate the folding of proteins. It catalyzes the cis-trans isomerization of proline imidic peptide bonds in oligopeptides. This chain is Putative peptidyl-prolyl cis-trans isomerase, found in Staphylococcus epidermidis (strain ATCC 35984 / DSM 28319 / BCRC 17069 / CCUG 31568 / BM 3577 / RP62A).